Reading from the N-terminus, the 229-residue chain is Phosphoglycolate phosphatase (229 aa).

The active-site Nucleophile is Asp-18. Mg(2+)-binding residues include Asp-18, Asp-20, and Asp-176.

The protein belongs to the HAD-like hydrolase superfamily. CbbY/CbbZ/Gph/YieH family. Mg(2+) is required as a cofactor.

The enzyme catalyses 2-phosphoglycolate + H2O = glycolate + phosphate. It functions in the pathway organic acid metabolism; glycolate biosynthesis; glycolate from 2-phosphoglycolate: step 1/1. Its function is as follows. Specifically catalyzes the dephosphorylation of 2-phosphoglycolate. Is involved in the dissimilation of the intracellular 2-phosphoglycolate formed during the DNA repair of 3'-phosphoglycolate ends, a major class of DNA lesions induced by oxidative stress. This Xylella fastidiosa (strain 9a5c) protein is Phosphoglycolate phosphatase.